Here is a 354-residue protein sequence, read N- to C-terminus: Histidinol-phosphate aminotransferase (354 aa).

Lysine 222 bears the N6-(pyridoxal phosphate)lysine mark.

The protein belongs to the class-II pyridoxal-phosphate-dependent aminotransferase family. Histidinol-phosphate aminotransferase subfamily. Homodimer. Requires pyridoxal 5'-phosphate as cofactor.

It catalyses the reaction L-histidinol phosphate + 2-oxoglutarate = 3-(imidazol-4-yl)-2-oxopropyl phosphate + L-glutamate. The protein operates within amino-acid biosynthesis; L-histidine biosynthesis; L-histidine from 5-phospho-alpha-D-ribose 1-diphosphate: step 7/9. This chain is Histidinol-phosphate aminotransferase, found in Staphylococcus carnosus (strain TM300).